The following is a 588-amino-acid chain: Aspartate--tRNA ligase (588 aa).

Position 172 (E172) interacts with L-aspartate. The tract at residues 196–199 is aspartate; it reads QLFK. R218 is an L-aspartate binding site. Residues 218 to 220 and Q227 each bind ATP; that span reads RDE. H449 serves as a coordination point for L-aspartate. Position 483 (E483) interacts with ATP. Residue R490 coordinates L-aspartate. 535-538 serves as a coordination point for ATP; that stretch reads GLDR.

It belongs to the class-II aminoacyl-tRNA synthetase family. Type 1 subfamily. In terms of assembly, homodimer.

It localises to the cytoplasm. It catalyses the reaction tRNA(Asp) + L-aspartate + ATP = L-aspartyl-tRNA(Asp) + AMP + diphosphate. Its function is as follows. Catalyzes the attachment of L-aspartate to tRNA(Asp) in a two-step reaction: L-aspartate is first activated by ATP to form Asp-AMP and then transferred to the acceptor end of tRNA(Asp). This is Aspartate--tRNA ligase from Histophilus somni (strain 2336) (Haemophilus somnus).